A 476-amino-acid chain; its full sequence is E1B 55 kDa protein (476 aa).

Disordered stretches follow at residues 1 to 20 (MERP…GNGS) and 42 to 95 (FGSS…KMEN). A phosphoserine mark is found at serine 472 and serine 473.

It belongs to the adenoviridae E1B 55 kDa protein family. As to quaternary structure, interacts with host PML-4 and PML-5; this interaction promotes efficient subnuclear targeting of E1B-55K to PML nuclear bodies. Interacts with E4-ORF3 protein. Interacts with E4-ORF6 protein.

The protein localises to the host nucleus. It localises to the host cytoplasm. Plays a major role to prevent cellular inhibition of viral genome replication. Assembles an SCF-like E3 ubiquitin ligase complex based on the cellular proteins ELOB, ELOC, CUL5 and RBX1, in cooperation with viral E4orf6. This viral RING-type ligase ubiquitinates cellular substrates and targets them to proteasomal degradation: TP53/p53, LIG4, MRE11-RAD50-NBS1 (MRN) complex, ITGA3, DAXX and BLM. E1B-55K probably acts as the substrate-specific adapter of the SCF-like E3 ubiquitin ligase complex. Degradation of host TP53/p53 activity is essential for preventing E1A-induced TP53 accumulation that would otherwise lead to cell apoptosis and growth arrest. E1B-55K also inactivates TP53 transcription-factor activity by binding its transactivation domain. E1B-55K also functions as a SUMO1 E3 ligase for TP53 which causes the latter to be sequestered in promyelocytic leukemia (PML) nuclear bodies thereby contributing to maximal inhibition of TP53 function. The sequence is that of E1B 55 kDa protein from Human adenovirus F serotype 40 (HAdV-40).